A 323-amino-acid polypeptide reads, in one-letter code: MDPTISSLSTESTTLNKTGHPSCRPILTLSFLVPIITLLGLAGNTIVLWLLGFRMRRKAISVYVLNLSLADSFFLCCHFIDSLMRIMNFYGIYAHKLSKEILGNAAIIPYISGLSILSAISTERCLSVLWPIWYHCHRPRNMSAIICVLIWVLSFLMGILDWFFSGFLGETHHHLWKNVDFIVTAFLIFLFMLLFGSSLALLVRILCGSRRKPLSRLYVTISLTVMVYLICGLPLGLYLFLLYWFGIHLHYPFCHIYQVTVLLSCVNSSANPIIYFLVGSFRHRKKHRSLKMVLKRALEETPEEDEYTDSHVQKPTEISERRC.

Residues 1 to 30 (MDPTISSLSTESTTLNKTGHPSCRPILTLS) are Extracellular-facing. Asn16 is a glycosylation site (N-linked (GlcNAc...) asparagine). The helical transmembrane segment at 31-51 (FLVPIITLLGLAGNTIVLWLL) threads the bilayer. Residues 52 to 59 (GFRMRRKA) are Cytoplasmic-facing. A helical membrane pass occupies residues 60–80 (ISVYVLNLSLADSFFLCCHFI). Topologically, residues 81–100 (DSLMRIMNFYGIYAHKLSKE) are extracellular. The helical transmembrane segment at 101–121 (ILGNAAIIPYISGLSILSAIS) threads the bilayer. The Cytoplasmic portion of the chain corresponds to 122–143 (TERCLSVLWPIWYHCHRPRNMS). A helical transmembrane segment spans residues 144–164 (AIICVLIWVLSFLMGILDWFF). The Extracellular segment spans residues 165–180 (SGFLGETHHHLWKNVD). The chain crosses the membrane as a helical span at residues 181–201 (FIVTAFLIFLFMLLFGSSLAL). At 202–226 (LVRILCGSRRKPLSRLYVTISLTVM) the chain is on the cytoplasmic side. Residues 227-247 (VYLICGLPLGLYLFLLYWFGI) traverse the membrane as a helical segment. Residues 248–258 (HLHYPFCHIYQ) lie on the Extracellular side of the membrane. The helical transmembrane segment at 259–279 (VTVLLSCVNSSANPIIYFLVG) threads the bilayer. Residues 280–323 (SFRHRKKHRSLKMVLKRALEETPEEDEYTDSHVQKPTEISERRC) lie on the Cytoplasmic side of the membrane.

Belongs to the G-protein coupled receptor 1 family. Mas subfamily. As to expression, uniquely localized in a subset of small dorsal root and trigeminal sensory neurons. Associated preferentially with IB4 class of small-diameter somatosensory afferents (also known as nociceptors).

The protein localises to the cell membrane. Its function is as follows. Orphan receptor activated by neuropeptides terminating in Arg-Phe or Arg-Phe-amide. Mediates its action by association with G proteins that activate a phosphatidylinositol-calcium second messenger system. Its effect is mediated by G(q) and G(11) proteins. May regulate the function of nociceptive neurons by modulation of pain perception. The sequence is that of Mas-related G-protein coupled receptor member X1 (Mrgprx1) from Rattus norvegicus (Rat).